The chain runs to 599 residues: Elongation factor 4 (599 aa).

Residues 2-184 (NYKRNFSIIA…RLVRDIPAPK (183 aa)) enclose the tr-type G domain. GTP is bound by residues 14 to 19 (DHGKST) and 131 to 134 (NKID).

This sequence belongs to the TRAFAC class translation factor GTPase superfamily. Classic translation factor GTPase family. LepA subfamily.

The protein resides in the cell membrane. It carries out the reaction GTP + H2O = GDP + phosphate + H(+). Its function is as follows. Required for accurate and efficient protein synthesis under certain stress conditions. May act as a fidelity factor of the translation reaction, by catalyzing a one-codon backward translocation of tRNAs on improperly translocated ribosomes. Back-translocation proceeds from a post-translocation (POST) complex to a pre-translocation (PRE) complex, thus giving elongation factor G a second chance to translocate the tRNAs correctly. Binds to ribosomes in a GTP-dependent manner. The chain is Elongation factor 4 from Hamiltonella defensa subsp. Acyrthosiphon pisum (strain 5AT).